Reading from the N-terminus, the 210-residue chain is Outer-membrane lipoprotein carrier protein (210 aa).

A signal peptide spans 1–22 (MRAFKWALAIGATLALPLTAQA).

This sequence belongs to the LolA family. As to quaternary structure, monomer.

The protein resides in the periplasm. Functionally, participates in the translocation of lipoproteins from the inner membrane to the outer membrane. Only forms a complex with a lipoprotein if the residue after the N-terminal Cys is not an aspartate (The Asp acts as a targeting signal to indicate that the lipoprotein should stay in the inner membrane). In Chromohalobacter salexigens (strain ATCC BAA-138 / DSM 3043 / CIP 106854 / NCIMB 13768 / 1H11), this protein is Outer-membrane lipoprotein carrier protein.